The following is a 370-amino-acid chain: Protein Mut11 (370 aa).

Residues 1 to 22 (MARGPGDTDMDEASADAAIPSS) are disordered. 7 WD repeats span residues 38–77 (GHTK…RVNT), 80–119 (GHSC…CLRT), 122–162 (GHTN…CLRE), 165–204 (AHSD…CLKT), 208–247 (RDSP…TRRT), 262–301 (GFLG…VVGR), and 329–370 (GHTA…PAAA).

Belongs to the WD repeat WDR5/wds family.

It localises to the nucleus. Part of a complex involved in 'Lys-4' histone H3 methylation. In Chlamydomonas reinhardtii (Chlamydomonas smithii), this protein is Protein Mut11 (Mut11).